Here is a 79-residue protein sequence, read N- to C-terminus: Short neurotoxin 4 (79 aa).

A signal peptide spans 1 to 21 (MKTLLLTLVMVTIMCLDLGYT). Intrachain disulfides connect cysteine 24/cysteine 41, cysteine 34/cysteine 59, and cysteine 63/cysteine 71.

Belongs to the three-finger toxin family. Short-chain subfamily. Type III alpha-neurotoxin sub-subfamily. In terms of tissue distribution, expressed by the venom gland.

Its subcellular location is the secreted. Binds with high affinity to muscle nicotinic acetylcholine receptor (nAChR) and hinders acetylcholine binding to the receptor, thereby impairing neuromuscular transmission. Causes muscle paralysis, spasms and increased respiration. This Pseudonaja textilis (Eastern brown snake) protein is Short neurotoxin 4.